A 379-amino-acid polypeptide reads, in one-letter code: Heme A synthase (379 aa).

Residues 1-28 (MAGSRSIFEEVQDSQKPAAMPGGVSRDR) form a disordered region. 8 helical membrane passes run 35–55 (VRVF…IGGL), 124–144 (FLGV…SVPV), 150–170 (LLLL…MVHS), 183–203 (RLAV…WYIL), 227–247 (ATGL…VAGI), 287–307 (FFHR…WIMA), 318–338 (AFDW…MTVM), and 341–361 (SPWY…TLIL). Heme is bound at residue His289. His349 is a heme binding site.

Belongs to the COX15/CtaA family. Type 2 subfamily. As to quaternary structure, interacts with CtaB. Heme b serves as cofactor.

The protein localises to the cell membrane. It catalyses the reaction Fe(II)-heme o + 2 A + H2O = Fe(II)-heme a + 2 AH2. It functions in the pathway porphyrin-containing compound metabolism; heme A biosynthesis; heme A from heme O: step 1/1. Functionally, catalyzes the conversion of heme O to heme A by two successive hydroxylations of the methyl group at C8. The first hydroxylation forms heme I, the second hydroxylation results in an unstable dihydroxymethyl group, which spontaneously dehydrates, resulting in the formyl group of heme A. The sequence is that of Heme A synthase from Jannaschia sp. (strain CCS1).